The following is a 511-amino-acid chain: Xylose import ATP-binding protein XylG (511 aa).

2 ABC transporter domains span residues 6-244 (LEMR…VGRE) and 261-506 (FEAR…IGKP).

It belongs to the ABC transporter superfamily. Xylose importer (TC 3.A.1.2.4) family. The complex is composed of two ATP-binding proteins (XylG), two transmembrane proteins (XylH) and a solute-binding protein (XylF).

Its subcellular location is the cell inner membrane. It catalyses the reaction D-xylose(out) + ATP + H2O = D-xylose(in) + ADP + phosphate + H(+). Part of the ABC transporter complex XylFGH involved in xylose import. Responsible for energy coupling to the transport system. This is Xylose import ATP-binding protein XylG from Brucella melitensis biotype 1 (strain ATCC 23456 / CCUG 17765 / NCTC 10094 / 16M).